Here is a 391-residue protein sequence, read N- to C-terminus: S-adenosylmethionine synthase 5 (391 aa).

Glu-9 lines the Mg(2+) pocket. His-15 contacts ATP. Glu-43 is a binding site for K(+). L-methionine is bound by residues Glu-56 and Gln-99. ATP contacts are provided by residues 167 to 169, 235 to 238, Asp-246, 252 to 253, Ala-269, Lys-273, and Lys-277; these read DGK, SGRF, and RK. Residue Asp-246 participates in L-methionine binding. Residue Lys-277 participates in L-methionine binding.

Belongs to the AdoMet synthase family. In terms of assembly, homotetramer. The cofactor is Mn(2+). Requires Mg(2+) as cofactor. Co(2+) serves as cofactor. K(+) is required as a cofactor.

The protein resides in the cytoplasm. It catalyses the reaction L-methionine + ATP + H2O = S-adenosyl-L-methionine + phosphate + diphosphate. The protein operates within amino-acid biosynthesis; S-adenosyl-L-methionine biosynthesis; S-adenosyl-L-methionine from L-methionine: step 1/1. In terms of biological role, catalyzes the formation of S-adenosylmethionine from methionine and ATP. The reaction comprises two steps that are both catalyzed by the same enzyme: formation of S-adenosylmethionine (AdoMet) and triphosphate, and subsequent hydrolysis of the triphosphate. The chain is S-adenosylmethionine synthase 5 (METK5) from Vitis vinifera (Grape).